The sequence spans 602 residues: Potassium voltage-gated channel subfamily A member 5 (602 aa).

The segment at 1 to 107 is disordered; that stretch reads MEISLVPMEN…EDQAPQDSGS (107 aa). Residues 1–202 are tetramerization domain; that stretch reads MEISLVPMEN…FYQLGDEAME (202 aa). Topologically, residues 1-238 are cytoplasmic; it reads MEISLVPMEN…LIFEYPESSG (238 aa). A compositionally biased stretch (pro residues) spans 66–78; it reads PLPPMPQELPQPR. Serine 81 is subject to Phosphoserine; by CK2 and PKA. Residue lysine 212 forms a Glycyl lysine isopeptide (Lys-Gly) (interchain with G-Cter in SUMO) linkage. A helical membrane pass occupies residues 239 to 260; the sequence is SARAIAIVSVLVILISIITFCL. Topologically, residues 261 to 314 are extracellular; the sequence is ETLPEFRDERELLRHPPVPPQPPAPAPGANGSGSGVLSSGPTVAPLLPRTLADP. The disordered stretch occupies residues 274–297; the sequence is RHPPVPPQPPAPAPGANGSGSGVL. Over residues 276-286 the composition is skewed to pro residues; sequence PPVPPQPPAPA. Asparagine 290 is a glycosylation site (N-linked (GlcNAc...) asparagine). Residues 315–336 traverse the membrane as a helical segment; the sequence is FFIVETTCVIWFTFELLVRFFA. Cysteine 337 carries the S-palmitoyl cysteine lipid modification. Residues 337–347 lie on the Cytoplasmic side of the membrane; it reads CPSKAEFSRNI. The helical transmembrane segment at 348-368 threads the bilayer; that stretch reads MNIIDIVAIFPYFITLGTELA. Residues 369–384 lie on the Extracellular side of the membrane; that stretch reads EQQPGGGGQNGQQAMS. Residues 385–405 form a helical; Voltage-sensor membrane-spanning segment; that stretch reads LAILRVIRLVRVFRIFKLSRH. Over 406–420 the chain is Cytoplasmic; that stretch reads SKGLQILGKTLQASM. Residues 407–420 form an S4-S5 linker region; it reads KGLQILGKTLQASM. The chain crosses the membrane as a helical span at residues 421–442; that stretch reads RELGLLIFFLFIGVILFSSAVY. The Extracellular portion of the chain corresponds to 443–456; that stretch reads FAEADNQGSHFSSI. The segment at residues 457–468 is an intramembrane region (helical); it reads PDAFWWAVVTMT. The Selectivity filter motif lies at 469 to 474; sequence TVGYGD. The stretch at 469–476 is an intramembrane region; it reads TVGYGDMR. Residues 477–483 lie on the Extracellular side of the membrane; the sequence is PITVGGK. A helical transmembrane segment spans residues 484 to 512; the sequence is IVGSLCAIAGVLTIALPVPVIVSNFNYFY. The Cytoplasmic segment spans residues 513 to 602; the sequence is HRETDHEEQA…CLDTSRETDL (90 aa). A Glycyl lysine isopeptide (Lys-Gly) (interchain with G-Cter in SUMO) cross-link involves residue lysine 525. Residues serine 535, serine 546, and serine 569 each carry the phosphoserine; by PKA modification. The PDZ-binding motif lies at 600–602; the sequence is TDL.

It belongs to the potassium channel family. A (Shaker) (TC 1.A.1.2) subfamily. Kv1.5/KCNA5 sub-subfamily. Homotetramer and heterotetramer of potassium channel proteins. Interacts with DLG1, which enhances channel currents. Forms a ternary complex with DLG1 and CAV3. Interacts with KCNAB1. Interacts with UBE2I. Interacts with XIRP2; the interaction is required for normal action potential configuration in the heart. Glycosylated. Post-translationally, sumoylated on Lys-212, and Lys-525, preferentially with SUMO3. Sumoylation regulates the voltage sensitivity of the channel. Expressed in the heart (at protein level). Expressed in the brain and weakly expressed in the thymus, skeletal muscle and spleen.

It localises to the cell membrane. It catalyses the reaction K(+)(in) = K(+)(out). Functionally, voltage-gated potassium channel that mediates transmembrane potassium transport in excitable membranes. Forms tetrameric potassium-selective channels through which potassium ions pass in accordance with their electrochemical gradient. The channel alternates between opened and closed conformations in response to the voltage difference across the membrane. Can form functional homotetrameric channels and heterotetrameric channels that contain variable proportions of KCNA1, KCNA2, KCNA4, KCNA5, and possibly other family members as well; channel properties depend on the type of alpha subunits that are part of the channel. Channel properties are modulated by cytoplasmic beta subunits that regulate the subcellular location of the alpha subunits and promote rapid inactivation. Homotetrameric channels display rapid activation and slow inactivation. Required for normal electrical conduction including formation of the infranodal ventricular conduction system and normal action potential configuration, as a result of its interaction with XIRP2. May play a role in regulating the secretion of insulin in normal pancreatic islets. Voltage-gated potassium channel that mediates transmembrane potassium transport in excitable membranes. Forms tetrameric potassium-selective channels through which potassium ions pass in accordance with their electrochemical gradient. The channel alternates between opened and closed conformations in response to the voltage difference across the membrane. In terms of biological role, inactive. Inhibits expression of isoform 1 and isoform 2. The protein is Potassium voltage-gated channel subfamily A member 5 (Kcna5) of Mus musculus (Mouse).